The sequence spans 86 residues: UPF0297 protein CA_C1679 (86 aa).

This sequence belongs to the UPF0297 family.

The chain is UPF0297 protein CA_C1679 from Clostridium acetobutylicum (strain ATCC 824 / DSM 792 / JCM 1419 / IAM 19013 / LMG 5710 / NBRC 13948 / NRRL B-527 / VKM B-1787 / 2291 / W).